A 217-amino-acid polypeptide reads, in one-letter code: Ribonuclease T (217 aa).

The region spanning 20–194 is the Exonuclease domain; sequence VVIDVETGGF…YDTDRTAELF (175 aa). Positions 23, 25, 181, and 186 each coordinate Mg(2+). The Proton donor/acceptor role is filled by His-181.

Belongs to the RNase T family. Homodimer. Mg(2+) serves as cofactor.

Functionally, trims short 3' overhangs of a variety of RNA species, leaving a one or two nucleotide 3' overhang. Responsible for the end-turnover of tRNA: specifically removes the terminal AMP residue from uncharged tRNA (tRNA-C-C-A). Also appears to be involved in tRNA biosynthesis. This chain is Ribonuclease T, found in Photorhabdus laumondii subsp. laumondii (strain DSM 15139 / CIP 105565 / TT01) (Photorhabdus luminescens subsp. laumondii).